The sequence spans 192 residues: Glycerol-3-phosphate acyltransferase (192 aa).

The next 5 membrane-spanning stretches (helical) occupy residues 3–23 (ALFLVIFAYLLGSITFGEVIA), 51–71 (YGVLVFFLDFLKGFIPALIAV), 80–100 (VLTFTGLASVLGHMYPVFFGF), 112–132 (VVFAVSPSVALFSFLVWLGIF), and 149–169 (AFLFLFVAGYPVNVLFMAIVI).

This sequence belongs to the PlsY family. As to quaternary structure, probably interacts with PlsX.

Its subcellular location is the cell inner membrane. It catalyses the reaction an acyl phosphate + sn-glycerol 3-phosphate = a 1-acyl-sn-glycero-3-phosphate + phosphate. The protein operates within lipid metabolism; phospholipid metabolism. In terms of biological role, catalyzes the transfer of an acyl group from acyl-phosphate (acyl-PO(4)) to glycerol-3-phosphate (G3P) to form lysophosphatidic acid (LPA). This enzyme utilizes acyl-phosphate as fatty acyl donor, but not acyl-CoA or acyl-ACP. This Aquifex aeolicus (strain VF5) protein is Glycerol-3-phosphate acyltransferase.